We begin with the raw amino-acid sequence, 165 residues long: MTTTRHRLLATASRFVTTLESLDVDAMLAVRSPTCLHHMCLPSFRNYSITNDQTREAFPQWKATITKYQFGILDDSQTLVDEQARKVMIRAKTAAETTVGDYNNEYVFILRMTEDCDTVDEIWEFYDSLRLRDLHHRLEGGHVPIGVDAPAPFTTTGSNSLDRSK.

This sequence belongs to the trt14 isomerase family. Homodimer.

The protein operates within secondary metabolite biosynthesis; terpenoid biosynthesis. Functionally, part of the gene cluster that mediates the biosynthesis of calidodehydroaustin, a fungal meroterpenoid. The first step of the pathway is the synthesis of 3,5-dimethylorsellinic acid by the polyketide synthase ausA. 3,5-dimethylorsellinic acid is then prenylated by the polyprenyl transferase ausN. Further epoxidation by the FAD-dependent monooxygenase ausM and cyclization by the probable terpene cyclase ausL lead to the formation of protoaustinoid A. Protoaustinoid A is then oxidized to spiro-lactone preaustinoid A3 by the combined action of the FAD-binding monooxygenases ausB and ausC, and the dioxygenase ausE. Acid-catalyzed keto-rearrangement and ring contraction of the tetraketide portion of preaustinoid A3 by ausJ lead to the formation of preaustinoid A4. The aldo-keto reductase ausK, with the help of ausH, is involved in the next step by transforming preaustinoid A4 into isoaustinone which is in turn hydroxylated by the P450 monooxygenase ausI to form austinolide. The cytochrome P450 monooxygenase ausG modifies austinolide to austinol. Austinol is further acetylated to austin by the O-acetyltransferase ausP, which spontaneously changes to dehydroaustin. The cytochrome P450 monooxygenase ausR then converts dehydroaustin is into 7-dehydrodehydroaustin. The hydroxylation catalyzed by ausR permits the O-acetyltransferase ausQ to add an additional acetyl group to the molecule, leading to the formation of acetoxydehydroaustin. The short chain dehydrogenase ausT catalyzes the reduction of the double bond present between carbon atoms 1 and 2 to convert 7-dehydrodehydroaustin into 1,2-dihydro-7-hydroxydehydroaustin. AusQ catalyzes not only an acetylation reaction but also the addition of the PKS ausV diketide product to 1,2-dihydro-7-hydroxydehydroaustin, forming precalidodehydroaustin. Finally, the iron/alpha-ketoglutarate-dependent dioxygenase converts precalidodehydroaustin into calidodehydroaustin. This chain is Austinoid biosynthesis cluster protein J, found in Aspergillus calidoustus.